Here is a 642-residue protein sequence, read N- to C-terminus: 1-deoxy-D-xylulose-5-phosphate synthase 2 (642 aa).

Thiamine diphosphate-binding positions include His-79 and 120–122; that span reads AHS. Position 155 (Asp-155) interacts with Mg(2+). Thiamine diphosphate-binding positions include 156-157, Asn-184, Tyr-293, and Glu-375; that span reads GS. Asn-184 contributes to the Mg(2+) binding site.

This sequence belongs to the transketolase family. DXPS subfamily. In terms of assembly, homodimer. The cofactor is Mg(2+). Requires thiamine diphosphate as cofactor.

The catalysed reaction is D-glyceraldehyde 3-phosphate + pyruvate + H(+) = 1-deoxy-D-xylulose 5-phosphate + CO2. It participates in metabolic intermediate biosynthesis; 1-deoxy-D-xylulose 5-phosphate biosynthesis; 1-deoxy-D-xylulose 5-phosphate from D-glyceraldehyde 3-phosphate and pyruvate: step 1/1. Functionally, catalyzes the acyloin condensation reaction between C atoms 2 and 3 of pyruvate and glyceraldehyde 3-phosphate to yield 1-deoxy-D-xylulose-5-phosphate (DXP). In Roseobacter denitrificans (strain ATCC 33942 / OCh 114) (Erythrobacter sp. (strain OCh 114)), this protein is 1-deoxy-D-xylulose-5-phosphate synthase 2.